The following is a 664-amino-acid chain: Intraflagellar transport protein 70A2 (664 aa).

TPR repeat units follow at residues 11–44 (DGEF…SSRS), 45–78 (RAGL…HPEL), 153–186 (PDGL…SGYQ), 188–220 (DVSY…GIRQ), 395–423 (QVQE…EKYI), 424–456 (PVLM…CNDH), and 458–491 (VWKL…NYDN). The stretch at 507-534 (YIMTSQNEEAEELMRKIEKEEEQLSYGD) forms a coiled coil. The stretch at 543–576 (CIVNLVIGTLYCAKGNYDFGISRVIKSLEPYHKK) is one TPR 8 repeat.

This sequence belongs to the TTC30/dfy-1/fleer family. As to quaternary structure, interacts wit the IFT B complex component IFT52.

Its subcellular location is the cell projection. The protein localises to the cilium. In terms of biological role, required for polyglutamylation of axonemal tubulin. Plays a role in anterograde intraflagellar transport (IFT), the process by which cilia precursors are transported from the base of the cilium to the site of their incorporation at the tip. In Mus musculus (Mouse), this protein is Intraflagellar transport protein 70A2 (Ift70a2).